The chain runs to 62 residues: Large ribosomal subunit protein uL30 (62 aa).

Belongs to the universal ribosomal protein uL30 family. Part of the 50S ribosomal subunit.

This chain is Large ribosomal subunit protein uL30, found in Paracoccus denitrificans (strain Pd 1222).